The sequence spans 182 residues: Fatty-acid and retinol-binding protein 1 (182 aa).

A signal peptide spans 1 to 17; the sequence is MIRATIILAAVAALAFS. A coiled-coil region spans residues 86 to 106; the sequence is EKASKLHQIVKDKVNALNDEA.

Belongs to the fatty-acid and retinol-binding protein (FARBP) family.

The protein localises to the secreted. Functionally, probably binds lipids. This is Fatty-acid and retinol-binding protein 1 (far-1) from Caenorhabditis elegans.